A 78-amino-acid chain; its full sequence is Antitoxin VapB27 (78 aa).

In terms of domain architecture, SpoVT-AbrB spans 1–45 (MKAVVDAAGRIVVPKPLREALGLQPGSTVEISRYGAGLHLIPTGR).

It belongs to the VapB family. In terms of assembly, interacts with cognate toxin VapC27 and non-cognate toxins MazF6 and VapC40. Interaction with MazF6 and MazF9 partially neutralizes the toxins.

Its function is as follows. Antitoxin component of a type II toxin-antitoxin (TA) system. Cognate toxin is VapC27. Upon expression in E.coli partially counteracts the ribonuclease activity of non-cognate toxins MazF6 and MazF9. In Mycobacterium tuberculosis (strain ATCC 25618 / H37Rv), this protein is Antitoxin VapB27 (vapB27).